Here is a 511-residue protein sequence, read N- to C-terminus: Maturase K (511 aa).

It belongs to the intron maturase 2 family. MatK subfamily.

Its subcellular location is the plastid. The protein resides in the chloroplast. Functionally, usually encoded in the trnK tRNA gene intron. Probably assists in splicing its own and other chloroplast group II introns. This is Maturase K from Lolium perenne (Perennial ryegrass).